The primary structure comprises 692 residues: Ribonuclease J (692 aa).

The interval 1-91 (MTDNNQNNEN…RNYAKEELDN (91 aa)) is disordered. Residues 9–25 (ENHENSSENSKDHHEAR) are compositionally biased toward basic and acidic residues. Over residues 57–79 (HHKKEHRPNKKPNNHHKPKHASQ) the composition is skewed to basic residues. Lys-135 and Lys-141 each carry N6-acetyllysine. Residues His-209, His-211, Asp-213, His-214, His-278, and Asp-300 each contribute to the Zn(2+) site. An N6-acetyllysine mark is found at Lys-324, Lys-338, and Lys-398. 501 to 505 (HVSGH) contributes to the substrate binding site. The residue at position 512 (Lys-512) is an N6-acetyllysine. A Zn(2+)-binding site is contributed by His-527. An N6-acetyllysine mark is found at Lys-548, Lys-635, and Lys-650.

The protein belongs to the metallo-beta-lactamase superfamily. RNA-metabolizing metallo-beta-lactamase-like family. Bacterial RNase J subfamily. In terms of assembly, homodimer. Homotetramer; dimer of homodimers. Interacts with RNA helicase RhpA, might be a member of a minimal RNA degradosome complex. Requires Zn(2+) as cofactor. Post-translationally, acetylated on nine lysine residues. Some of the residues are acetylated by multiple different mechanisms. RimL is partially responsible for the acetylation of Lys-324, Lys-398 and Lys-650. HPB8_1270 homolog is partially responsible for the acetylation of Lys-324, Lys-398, Lys-512 and Lys-650. Acetyl-phosphate-mediated non-enzymatic acetylation pathway takes part in the acetylation of Lys-135, Lys-324, Lys-398, Lys-512 and Lys-650. Acetylation of the remaining residues Lys-141, Lys-338, Lys-548 and Lys-635 occurs by a yet undetermined mechanism. Acetylation on a number of these residues is important for growth regulation and proper cell morphology.

Its subcellular location is the cytoplasm. Catalytic activity is regulated by the balance between homodimers and homotetramers, with homotetramers being the active forms of this enzyme. Acetylation allosterically regulates the homooligomerization state and hence the catalytic activity. An RNase that has 5'-3' exoribonuclease and endoribonuclease activity. Degrades 5'-monophosphorylated ssRNA and dsRNA, considerably more active on ssRNA. Association with RhpA significantly increases the dsRNase activity. Degrades RNA substrate with hairpin structures at both ends with low activity, but presence of RhpA significantly increases the activity on this substrate. Stimulates ATPase activity of RNA helicase RhpA. Involved in stabilization of mRNA but apparently not rRNA. The sequence is that of Ribonuclease J from Helicobacter pylori (strain J99 / ATCC 700824) (Campylobacter pylori J99).